A 348-amino-acid chain; its full sequence is Large ribosomal subunit protein uL3m (348 aa).

A mitochondrion-targeting transit peptide spans 1–40 (MPGWRLLTQVGAQVLGRLGDGLGAALGPGNRTHIWLFVRG).

This sequence belongs to the universal ribosomal protein uL3 family. Component of the mitochondrial large ribosomal subunit (mt-LSU). Mature mammalian 55S mitochondrial ribosomes consist of a small (28S) and a large (39S) subunit. The 28S small subunit contains a 12S ribosomal RNA (12S mt-rRNA) and 30 different proteins. The 39S large subunit contains a 16S rRNA (16S mt-rRNA), a copy of mitochondrial valine transfer RNA (mt-tRNA(Val)), which plays an integral structural role, and 52 different proteins.

The protein localises to the mitochondrion. The sequence is that of Large ribosomal subunit protein uL3m (MRPL3) from Homo sapiens (Human).